We begin with the raw amino-acid sequence, 346 residues long: Dihydroorotase (346 aa).

H13 and H15 together coordinate Zn(2+). Substrate-binding positions include 15 to 17 (HLR) and N41. The Zn(2+) site is built by K99, H136, and H174. The residue at position 99 (K99) is an N6-carboxylysine. Position 136 (H136) interacts with substrate. Residue L219 coordinates substrate. Zn(2+) is bound at residue D247. Residue D247 is part of the active site. Residues H251 and A263 each contribute to the substrate site.

It belongs to the metallo-dependent hydrolases superfamily. DHOase family. Class II DHOase subfamily. In terms of assembly, homodimer. Zn(2+) is required as a cofactor.

It carries out the reaction (S)-dihydroorotate + H2O = N-carbamoyl-L-aspartate + H(+). Its pathway is pyrimidine metabolism; UMP biosynthesis via de novo pathway; (S)-dihydroorotate from bicarbonate: step 3/3. Catalyzes the reversible cyclization of carbamoyl aspartate to dihydroorotate. The chain is Dihydroorotase from Rhizobium leguminosarum bv. trifolii (strain WSM2304).